We begin with the raw amino-acid sequence, 567 residues long: Oxygen-dependent choline dehydrogenase (567 aa).

4-33 serves as a coordination point for FAD; that stretch reads DYIIIGAGSAGNVLAARLTEDADVTVLLLE. H473 serves as the catalytic Proton acceptor.

It belongs to the GMC oxidoreductase family. Requires FAD as cofactor.

It carries out the reaction choline + A = betaine aldehyde + AH2. The enzyme catalyses betaine aldehyde + NAD(+) + H2O = glycine betaine + NADH + 2 H(+). The protein operates within amine and polyamine biosynthesis; betaine biosynthesis via choline pathway; betaine aldehyde from choline (cytochrome c reductase route): step 1/1. Involved in the biosynthesis of the osmoprotectant glycine betaine. Catalyzes the oxidation of choline to betaine aldehyde and betaine aldehyde to glycine betaine at the same rate. This is Oxygen-dependent choline dehydrogenase from Yersinia pseudotuberculosis serotype O:1b (strain IP 31758).